An 878-amino-acid chain; its full sequence is Protein daughter of sevenless (878 aa).

Residues 3–113 enclose the PH domain; it reads RTFYEGWLIK…WVNCICQVCH (111 aa). Residues 132-176 are disordered; that stretch reads ENRTQHTSSSGGLSNSTQNTTTTSLHSSAGTTAPQASVPNAGGSA. A compositionally biased stretch (low complexity) spans 136–159; it reads QHTSSSGGLSNSTQNTTTTSLHSS. A compositionally biased stretch (polar residues) spans 160 to 169; it reads AGTTAPQASV. A coiled-coil region spans residues 246–275; sequence ALIQAQAAAAAAEQLQQQQQQAARLAVSAN. The segment at 391 to 437 is disordered; the sequence is NNNASKQRSDSDSESVFTDDDEWAHPLPLRENVDRSTRPSDSSIENE. Ser399 bears the Phosphoserine mark. Position 481 is a phosphothreonine (Thr481). Interaction with DRK stretches follow at residues 638–650 and 690–702; these read DCPP…KPKV and GPPS…KPNA. Disordered regions lie at residues 686–721 and 749–773; these read QQPI…SSGA and LPRQ…RTAS. Composition is skewed to polar residues over residues 707–718 and 760–770; these read NSATMSPATRRS and SPGSMSVQHQR. A Phosphothreonine modification is found at Thr771. Tyr801 and Tyr854 each carry phosphotyrosine.

As to quaternary structure, interacts with DRK. Post-translationally, phosphorylated on Tyr-801 and Tyr-854 in response to sevenless activation, which initiates the recruitment of the phosphatase CSW.

It localises to the cytoplasm. It is found in the membrane. Essential component for signaling from various receptor tyrosine kinases such as Sevenless, TORSO and DER. Required for photoreceptor cell and wing development. The polypeptide is Protein daughter of sevenless (dos) (Drosophila melanogaster (Fruit fly)).